The chain runs to 444 residues: MFTKVLIANRGEIAMRIIRTCSRLGIKTVAVYSEADKDAPHTKAATEAYLIGESRVSESYLNIERIIKTAKKAKADAIHPGYGLLSENSRFAERCKQENIVFIGPSPDIIAKMGSKIEARKAMEAAGVPVVPGVSESLGDIEAACRTASQIGYPVMLKASAGGGGIGMQRVENEEALKKAYEGNKKRAADFFGDGSMYIEKVIEHARHIEVQLLADQHGHTVHLFERDCSVQRRHQKVIEEAPSPFVDDELRMKIGQTAVKAAKAIGYTNAGTIEFIVDQKQNFYFLEMNTRLQVEHPVTEEITGLDLVEQQLRIAAGHTLTFSQKDIQRNGHAIEVRIYAEDPKTFFPSPGTITAFSLPDQKGVRHECAVAKDSTVTPFYDPMIAKMIVKGQTRTEAIEKLETALRDYRVEGIKTNLPLLIQAAATKAFKEGDVTTDFLKQHL.

The Biotin carboxylation domain maps to methionine 1–leucine 444. Residues lysine 116, lysine 158, glycine 164–glycine 165, glutamate 200–isoleucine 203, histidine 208, and histidine 235 each bind ATP. Positions arginine 120 to alanine 317 constitute an ATP-grasp domain. Lysine 237 serves as a coordination point for hydrogencarbonate. The ATP site is built by glutamate 275 and glutamate 288. The Mg(2+) site is built by glutamate 275, glutamate 288, and asparagine 290. Mn(2+)-binding residues include glutamate 275, glutamate 288, and asparagine 290. Residues arginine 292, valine 295, and arginine 338 each contribute to the hydrogencarbonate site. The active site involves arginine 292. Arginine 338 contacts biotin.

As to quaternary structure, acetyl-CoA carboxylase is a heterohexamer of biotin carboxyl carrier protein, biotin carboxylase and the two subunits of carboxyl transferase in a 2:2 complex. It depends on Mg(2+) as a cofactor. Requires Mn(2+) as cofactor.

It carries out the reaction N(6)-biotinyl-L-lysyl-[protein] + hydrogencarbonate + ATP = N(6)-carboxybiotinyl-L-lysyl-[protein] + ADP + phosphate + H(+). Its pathway is lipid metabolism; malonyl-CoA biosynthesis; malonyl-CoA from acetyl-CoA: step 1/1. In terms of biological role, this protein is a component of the acetyl coenzyme A carboxylase complex; first, biotin carboxylase catalyzes the carboxylation of the carrier protein and then the transcarboxylase transfers the carboxyl group to form malonyl-CoA. This chain is Biotin carboxylase 2 (accC2), found in Bacillus subtilis (strain 168).